The sequence spans 476 residues: Amidophosphoribosyltransferase (476 aa).

A propeptide spanning residues 1-11 is cleaved from the precursor; the sequence is MLAEIKGLNEE. The active-site Nucleophile is C12. Residues 12 to 231 form the Glutamine amidotransferase type-2 domain; sequence CGVFGIWGHE…PGEMLIINDE (220 aa). C247 contacts [4Fe-4S] cluster. Mg(2+)-binding residues include S294, D356, and D357. [4Fe-4S] cluster contacts are provided by C393, C448, and C451.

In the C-terminal section; belongs to the purine/pyrimidine phosphoribosyltransferase family. Homotetramer. Mg(2+) serves as cofactor. Requires [4Fe-4S] cluster as cofactor.

It catalyses the reaction 5-phospho-beta-D-ribosylamine + L-glutamate + diphosphate = 5-phospho-alpha-D-ribose 1-diphosphate + L-glutamine + H2O. It participates in purine metabolism; IMP biosynthesis via de novo pathway; N(1)-(5-phospho-D-ribosyl)glycinamide from 5-phospho-alpha-D-ribose 1-diphosphate: step 1/2. With respect to regulation, allosterically regulated; subject to end product regulation by purine nucleotides. Its function is as follows. Catalyzes the formation of phosphoribosylamine from phosphoribosylpyrophosphate (PRPP) and glutamine. This chain is Amidophosphoribosyltransferase, found in Bacillus subtilis (strain 168).